A 240-amino-acid polypeptide reads, in one-letter code: Flavin-dependent thymidylate synthase (240 aa).

Residues Ile-13–Gln-235 form the ThyX domain. Residues Ser-64, Arg-87–Arg-89, and Glu-95 each bind FAD. DUMP is bound by residues Glu-84–Arg-87, Glu-95–Arg-99, and Arg-167. A ThyX motif motif is present at residues Arg-87–Ser-97. FAD-binding positions include Asn-183–Arg-185 and Asn-189. Arg-194 contacts dUMP. Arg-194 serves as the catalytic Involved in ionization of N3 of dUMP, leading to its activation.

Belongs to the thymidylate synthase ThyX family. As to quaternary structure, homotetramer. FAD is required as a cofactor.

The enzyme catalyses dUMP + (6R)-5,10-methylene-5,6,7,8-tetrahydrofolate + NADPH + H(+) = dTMP + (6S)-5,6,7,8-tetrahydrofolate + NADP(+). It participates in pyrimidine metabolism; dTTP biosynthesis. Catalyzes the reductive methylation of 2'-deoxyuridine-5'-monophosphate (dUMP) to 2'-deoxythymidine-5'-monophosphate (dTMP) while utilizing 5,10-methylenetetrahydrofolate (mTHF) as the methyl donor, and NADPH and FADH(2) as the reductant. This Tropheryma whipplei (strain TW08/27) (Whipple's bacillus) protein is Flavin-dependent thymidylate synthase.